A 37-amino-acid polypeptide reads, in one-letter code: Large ribosomal subunit protein bL36 (37 aa).

The protein belongs to the bacterial ribosomal protein bL36 family.

In Synechococcus elongatus (strain ATCC 33912 / PCC 7942 / FACHB-805) (Anacystis nidulans R2), this protein is Large ribosomal subunit protein bL36.